A 374-amino-acid polypeptide reads, in one-letter code: Ribosomal RNA large subunit methyltransferase G (374 aa).

This sequence belongs to the methyltransferase superfamily. RlmG family.

It localises to the cytoplasm. The enzyme catalyses guanosine(1835) in 23S rRNA + S-adenosyl-L-methionine = N(2)-methylguanosine(1835) in 23S rRNA + S-adenosyl-L-homocysteine + H(+). Functionally, specifically methylates the guanine in position 1835 (m2G1835) of 23S rRNA. The protein is Ribosomal RNA large subunit methyltransferase G of Pseudomonas putida (strain ATCC 47054 / DSM 6125 / CFBP 8728 / NCIMB 11950 / KT2440).